Here is a 351-residue protein sequence, read N- to C-terminus: Transcription factor Atoh1 (351 aa).

Disordered regions lie at residues 16 to 39 (LGDH…PATL) and 89 to 116 (EAAA…SKSP). Residues 26–36 (HHVPPLTPQPP) show a composition bias toward pro residues. The region spanning 156–208 (QRRLAANARERRRMHGLNHAFDQLRNVIPSFNNDKKLSKYETLQMAQIYINAL) is the bHLH domain. 2 disordered regions span residues 244-278 (GAGA…GPAS) and 308-351 (LSPS…DEAS). The span at 247-256 (ASAVAGAQPA) shows a compositional bias: low complexity. The span at 258 to 268 (GGGPRPTPPGP) shows a compositional bias: pro residues. Residues 332-351 (HRSDGEFSPHSHYSDSDEAS) show a composition bias toward basic and acidic residues.

Efficient DNA binding requires dimerization with another bHLH protein. As to expression, developing nervous system, and in adult epithelial cells of the gastrointestinal tract.

It localises to the nucleus. Functionally, transcriptional regulator. Activates E box-dependent transcription in collaboration with TCF3/E47, but the activity is completely antagonized by the negative regulator of neurogenesis HES1. Plays a role in the differentiation of subsets of neural cells by activating E box-dependent transcription. This Mus musculus (Mouse) protein is Transcription factor Atoh1.